The primary structure comprises 106 residues: Large ribosomal subunit protein uL24 (106 aa).

Belongs to the universal ribosomal protein uL24 family. In terms of assembly, part of the 50S ribosomal subunit.

One of two assembly initiator proteins, it binds directly to the 5'-end of the 23S rRNA, where it nucleates assembly of the 50S subunit. Its function is as follows. One of the proteins that surrounds the polypeptide exit tunnel on the outside of the subunit. The chain is Large ribosomal subunit protein uL24 from Alkalilimnicola ehrlichii (strain ATCC BAA-1101 / DSM 17681 / MLHE-1).